We begin with the raw amino-acid sequence, 315 residues long: Zinc transport protein ZntB (315 aa).

Residues 1 to 250 are Cytoplasmic-facing; it reads MGFMIEHWDF…RDEKTNKNSY (250 aa). Residues 251–271 form a helical membrane-spanning segment; it reads LFTLVATIFLPTSFLTGLLGI. The Periplasmic portion of the chain corresponds to 272 to 282; sequence NIGGMPGVESS. A helical membrane pass occupies residues 283–303; that stretch reads MAFTWFCIALIVIFGLEWLLF. At 304–315 the chain is on the cytoplasmic side; that stretch reads KRLGFTNKTDDE.

It belongs to the CorA metal ion transporter (MIT) (TC 1.A.35) family. As to quaternary structure, homopentamer. Can assemble pentamers in the absence of the transmembrane regions.

The protein localises to the cell inner membrane. The enzyme catalyses Zn(2+)(out) + H(+)(out) = Zn(2+)(in) + H(+)(in). In terms of biological role, zinc transporter. Acts as a Zn(2+):proton symporter, which likely mediates zinc ion uptake. This Vibrio parahaemolyticus serotype O3:K6 (strain RIMD 2210633) protein is Zinc transport protein ZntB.